The chain runs to 217 residues: Redox-sensing transcriptional repressor Rex (217 aa).

Residues 17 to 56 (RYLRYVEDLLNHDVLRISSSELSQRMGYTASQVRQDFNNF) constitute a DNA-binding region (H-T-H motif). 91 to 96 (GVGNLG) is an NAD(+) binding site.

Belongs to the transcriptional regulatory Rex family. As to quaternary structure, homodimer.

The protein localises to the cytoplasm. Its function is as follows. Modulates transcription in response to changes in cellular NADH/NAD(+) redox state. This Caldicellulosiruptor bescii (strain ATCC BAA-1888 / DSM 6725 / KCTC 15123 / Z-1320) (Anaerocellum thermophilum) protein is Redox-sensing transcriptional repressor Rex.